The sequence spans 513 residues: Ribonuclease Y (513 aa).

Residues 6 to 26 (YIIIAVVIIIICVILGLYIVD) traverse the membrane as a helical segment. The 86-residue stretch at 203 to 288 (TVHVVNLPND…EMVEKAKKEV (86 aa)) folds into the KH domain. The region spanning 329–422 (VLKHSIEVSH…VQAADAISAA (94 aa)) is the HD domain.

It belongs to the RNase Y family.

It is found in the cell membrane. Endoribonuclease that initiates mRNA decay. The protein is Ribonuclease Y of Clostridium botulinum (strain ATCC 19397 / Type A).